Reading from the N-terminus, the 1043-residue chain is Sarcoplasmic/endoplasmic reticulum calcium ATPase 2 (1043 aa).

The Cytoplasmic segment spans residues 1 to 48 (MENAHTKTVEEVLGHFGVNESTGLSLEQVKKLKERWGSNELPAEEGKT). A Phosphoserine modification is found at serine 38. The helical transmembrane segment at 49 to 69 (LLELVIEQFEDLLVRILLLAA) threads the bilayer. Residues 70-89 (CISFVLAWFEEGEETITAFV) are Lumenal-facing. The helical transmembrane segment at 90–110 (EPFVILLILVANAIVGVWQER) threads the bilayer. Residues 111–253 (NAENAIEALK…QERTPLQQKL (143 aa)) lie on the Cytoplasmic side of the membrane. A helical transmembrane segment spans residues 254-273 (DEFGEQLSKVISLICIAVWI). The Lumenal portion of the chain corresponds to 274-295 (INIGHFNDPVHGGSWIRGAIYY). Residues tyrosine 294 and tyrosine 295 each carry the 3'-nitrotyrosine modification. The chain crosses the membrane as a helical span at residues 296–313 (FKIAVALAVAAIPEGLPA). Ca(2+) is bound by residues valine 304, alanine 305, isoleucine 307, and glutamate 309. Residues 314 to 756 (VITTCLALGT…EEGRAIYNNM (443 aa)) are Cytoplasmic-facing. Aspartate 351 functions as the 4-aspartylphosphate intermediate in the catalytic mechanism. Residues aspartate 351 and threonine 353 each coordinate Mg(2+). Threonine 353 serves as a coordination point for ATP. Residue threonine 441 is modified to Phosphothreonine. The ATP site is built by glutamate 442, arginine 489, and lysine 514. Serine 531 is modified (phosphoserine). Residue arginine 559 coordinates ATP. The interaction with HAX1 stretch occupies residues 575–594 (MHLEDSANFIKYETNLTFVG). Serine 580 is subject to Phosphoserine. The ATP site is built by threonine 624, glycine 625, and aspartate 626. Phosphoserine occurs at positions 661 and 663. Residues arginine 677 and lysine 683 each coordinate ATP. Aspartate 702 is a binding site for Mg(2+). Asparagine 705 contacts ATP. A helical membrane pass occupies residues 757 to 776 (KQFIRYLISSNVGEVVCIFL). 2 residues coordinate Ca(2+): asparagine 767 and glutamate 770. Residues 777–786 (TAALGFPEAL) lie on the Lumenal side of the membrane. The chain crosses the membrane as a helical span at residues 787–807 (IPVQLLWVNLVTDGLPATALG). The interaction with PLN stretch occupies residues 787–807 (IPVQLLWVNLVTDGLPATALG). An interaction with TMEM64 and PDIA3 region spans residues 788-1043 (PVQLLWVNLV…DTNFSDMFWS (256 aa)). Ca(2+) contacts are provided by asparagine 795, threonine 798, and aspartate 799. The Cytoplasmic portion of the chain corresponds to 808–827 (FNPPDLDIMNKPPRNPKEPL). A helical membrane pass occupies residues 828–850 (ISGWLFFRYLAIGCYVGAATVGA). The Lumenal portion of the chain corresponds to 851-896 (AAWWFIAADGGPRVSFYQLSHFLQCKEDNPDFEGVDCAIFESPYPM). Cysteines 875 and 887 form a disulfide. Residues 897–916 (TMALSVLVTIEMCNALNSLS) traverse the membrane as a helical segment. Glutamate 907 contacts Ca(2+). Topologically, residues 917–929 (ENQSLLRMPPWEN) are cytoplasmic. The helical transmembrane segment at 930–948 (IWLVGSICLSMSLHFLILY) threads the bilayer. The interaction with PLN stretch occupies residues 931 to 942 (WLVGSICLSMSL). The Lumenal portion of the chain corresponds to 949-963 (VEPLPLIFQITPLNL). Residues 964 to 984 (TQWLMVLKISLPVILMDETLK) traverse the membrane as a helical segment. Topologically, residues 985 to 1043 (FVARNYLEPGKECAQPATKPSCSLSACTDGISWPFVLLIMPLVVWVYSTDTNFSDMFWS) are cytoplasmic.

The protein belongs to the cation transport ATPase (P-type) (TC 3.A.3) family. Type IIA subfamily. Interacts with sarcolipin (SLN); the interaction inhibits ATP2A2 Ca(2+) affinity. Interacts with phospholamban (PLN); the interaction inhibits ATP2A2 Ca(2+) affinity. Interacts with myoregulin (MRLN). Interacts with ARLN and ERLN; the interactions inhibit ATP2A2 Ca(2+) affinity. Interacts with STRIT1/DWORF; the interaction results in activation of ATP2A2. Interacts with the monomeric forms of SLN, PLN, ARLN, ERLN and STRI1/DWORF. Interacts with HAX1. Interacts with S100A8 and S100A9. Interacts with SLC35G1 and STIM1. Interacts with TMEM203. Interacts with TMEM64 and PDIA3. Interacts with TMX1. Interacts with TMX2. Interacts with VMP1; VMP1 competes with PLN and SLN to prevent them from forming an inhibitory complex with ATP2A2. Interacts with ULK1. Interacts with S100A1 in a Ca(2+)-dependent manner. Interacts with TUNAR. Interacts with FLVCR2; this interaction occurs in the absence of heme and promotes ATP2A2 proteasomal degradation; this complex is dissociated upon heme binding. Interacts with FNIP1. In terms of assembly, interacts with TRAM2 (via C-terminus). Mg(2+) is required as a cofactor. Post-translationally, nitrated under oxidative stress. Nitration on the two tyrosine residues inhibits catalytic activity. Serotonylated on Gln residues by TGM2 in response to hypoxia, leading to its inactivation. Isoform 2 is highly expressed in heart and slow twitch skeletal muscle. Isoform 1 is widely expressed.

Its subcellular location is the endoplasmic reticulum membrane. The protein localises to the sarcoplasmic reticulum membrane. The catalysed reaction is Ca(2+)(in) + ATP + H2O = Ca(2+)(out) + ADP + phosphate + H(+). Has different conformational states with differential Ca2+ affinity. The E1 conformational state (active form) shows high Ca(2+) affinity, while the E2 state exhibits low Ca(2+) affinity. Binding of ATP allosterically increases its affinity for subsequent binding of Ca2+. Reversibly inhibited by phospholamban (PLN) at low calcium concentrations. PLN inhibits ATP2A2 Ca(2+) affinity by disrupting its allosteric activation by ATP. Inhibited by sarcolipin (SLN) and myoregulin (MRLN). The inhibition is blocked by VMP1. Enhanced by STRIT1/DWORF; STRIT1 increases activity by displacing sarcolipin (SLN), phospholamban (PLN) and myoregulin (MRLN). Stabilizes SERCA2 in its E2 state. This magnesium-dependent enzyme catalyzes the hydrolysis of ATP coupled with the translocation of calcium from the cytosol to the sarcoplasmic reticulum lumen. Involved in autophagy in response to starvation. Upon interaction with VMP1 and activation, controls ER-isolation membrane contacts for autophagosome formation. Also modulates ER contacts with lipid droplets, mitochondria and endosomes. In coordination with FLVCR2 mediates heme-stimulated switching from mitochondrial ATP synthesis to thermogenesis. Its function is as follows. Involved in the regulation of the contraction/relaxation cycle. Acts as a regulator of TNFSF11-mediated Ca(2+) signaling pathways via its interaction with TMEM64 which is critical for the TNFSF11-induced CREB1 activation and mitochondrial ROS generation necessary for proper osteoclast generation. Association between TMEM64 and SERCA2 in the ER leads to cytosolic Ca(2+) spiking for activation of NFATC1 and production of mitochondrial ROS, thereby triggering Ca(2+) signaling cascades that promote osteoclast differentiation and activation. This chain is Sarcoplasmic/endoplasmic reticulum calcium ATPase 2 (Atp2a2), found in Rattus norvegicus (Rat).